We begin with the raw amino-acid sequence, 625 residues long: Probable potassium transport system protein Kup (625 aa).

The next 12 helical transmembrane spans lie at 13 to 33 (TALA…LYAL), 53 to 73 (ILSI…VAIV), 103 to 123 (IYMI…GIIT), 141 to 161 (VFDP…FLVQ), 172 to 192 (FGPI…HSVI), 206 to 226 (AIQF…AVVL), 250 to 270 (WFFV…ALLL), 282 to 302 (LLVP…ATVI), 340 to 360 (IYVP…ILIF), 369 to 389 (AYGL…AVFI), 400 to 420 (VLLL…ATSL), and 422 to 442 (ILSG…ILMT).

It belongs to the HAK/KUP transporter (TC 2.A.72) family.

It is found in the cell inner membrane. It carries out the reaction K(+)(in) + H(+)(in) = K(+)(out) + H(+)(out). Functionally, transport of potassium into the cell. Likely operates as a K(+):H(+) symporter. In Acinetobacter baumannii (strain ACICU), this protein is Probable potassium transport system protein Kup.